A 737-amino-acid polypeptide reads, in one-letter code: Death domain-associated protein 6 (737 aa).

Residues 1–55 (MATANSIIVLDDDDEDEAAAQPGPSHPPPNPASPQAEAPGSSQPHGAGGSSSSGG) form a disordered region. Residues 1 to 159 (MATANSIIVL…TSSEPSGNNP (159 aa)) are necessary for interaction with USP7 and ATRX. Phosphoserine is present on Ser-25. Positions 33-45 (SPQAEAPGSSQPH) are enriched in low complexity. Lys-142 is covalently cross-linked (Glycyl lysine isopeptide (Lys-Gly) (interchain with G-Cter in SUMO2)). Residues 145–184 (LAPAATSSEPSGNNPPTDPSSDPTNAETTASEAPRTRGSR) are disordered. The span at 149-175 (ATSSEPSGNNPPTDPSSDPTNAETTAS) shows a compositional bias: polar residues. A coiled-coil region spans residues 179–216 (RTRGSRRQIQRLEQLLALYVAEIRRLQEKELDLSELDD). An interaction with histone H3.3 region spans residues 182–417 (GSRRQIQRLE…PLKASLDSGE (236 aa)). A Phosphoserine modification is found at Ser-212. Residues 346–567 (GIDPALSDPA…SPISQLFELE (222 aa)) are necessary for interaction with USP7. Positions 382-556 (QDKSEEGERQ…ENLEELLLEE (175 aa)) are disordered. Residues 390-394 (RQKRR) carry the Nuclear localization signal motif. Phosphoserine occurs at positions 412 and 424. The segment covering 422-432 (MASQECPTTSK) has biased composition (polar residues). Residues 432–474 (KPETDDEEDEESEEEEEEEEEEEEEEATDSEEEEDLEQMQEGQ) adopt a coiled-coil conformation. Positions 435-489 (TDDEEDEESEEEEEEEEEEEEEEATDSEEEEDLEQMQEGQGDDEEEEEEEEEAGQ) are enriched in acidic residues. Position 459 is a phosphothreonine (Thr-459). Phosphoserine occurs at positions 494 and 497. Position 511 is an N6-acetyllysine (Lys-511). Over residues 517–527 (MGEQQNKEFTV) the composition is skewed to polar residues. A compositionally biased stretch (low complexity) spans 528–547 (SPSSEEPLAPSSIDAESNGE). A phosphoserine mark is found at Ser-558 and Ser-578. The segment at 569–719 (EALPLDTTPS…QPSRPGTYKM (151 aa)) is disordered. A compositionally biased stretch (basic and acidic residues) spans 579-592 (PEERDISSSRKQSE). The segment at 624–737 (CPPCKKSRKE…EEIIVLSDSD (114 aa)) is interaction with SPOP. The Nuclear localization signal motif lies at 626 to 632 (PCKKSRK). Residues Lys-628 and Lys-629 each participate in a glycyl lysine isopeptide (Lys-Gly) (interchain with G-Cter in SUMO1) cross-link. Positions 647 to 657 (ERQRSVHEKNG) are enriched in basic and acidic residues. Phosphoserine occurs at positions 665, 668, 685, 699, 734, and 736. Residues 678–713 (DSSTRVDSPSHGLVTSSLCSASQARLSQTPHSQPSR) are compositionally biased toward polar residues. Positions 730 to 737 (IIVLSDSD) are sumo interaction motif (SIM).

This sequence belongs to the DAXX family. In terms of assembly, homomultimer. Interacts (via C-terminus) with TNFRSF6 (via death domain). Interacts with PAX5, SLC2A4/GLUT4, MAP3K5, TGFBR2, phosphorylated dimeric HSPB1/HSP27, CENPC, ETS1, sumoylated PML, UBE2I, MCRS1 and TP53. Interacts (via N-terminus) with HIPK2 and HIPK3. Interacts with HIPK1, which induces translocation from PML/POD/ND10 nuclear bodies to chromatin and enhances association with HDAC1. Interacts (non-phosphorylated) with PAX3, PAX7, DEK, HDAC1, HDAC2, HDAC3, acetylated histone H4 and histones H2A, H2B, H3, H3.3 and H4. Interacts with SPOP; mediating CUL3-dependent proteasomal degradation. Interacts with CBP; the interaction is dependent the sumoylation of CBP and suppresses CBP transcriptional activity via recruitment of HDAC2 directly in the complex with TP53 and HIPK2. Interacts with AXIN1; the interaction stimulates the interaction of DAXX with TP53, stimulates 'Ser-46' phosphorylation of TP53 on and induces cell death on UV irradiation. Interacts with MDM2; the interaction is direct. Interacts with USP7; the interaction is direct and independent of MDM2 and TP53. Part of a complex with DAXX, MDM2 and USP7 under non-stress conditions. Interacts (via N-terminus) with RASSF1 (via C-terminus); the interaction is independent of MDM2 and TP53; RASSF1 isoform A disrupts interactions among MDM2, DAXX and USP7, thus contributing to the efficient activation of TP53 by promoting MDM2 self-ubiquitination in cell-cycle checkpoint control in response to DNA damage. Interacts with ATRX to form the chromatin remodeling complex ATRX:DAXX. Interacts with HSF1 (via homotrimeric form preferentially); this interaction relieves homotrimeric HSF1 from repression of its transcriptional activity by HSP90-dependent multichaperone complex upon heat shock. In terms of processing, sumoylated with SUMO1 on multiple lysine residues. Polyubiquitinated; which is promoted by CUL3 and SPOP and results in proteasomal degradation. Ubiquitinated by MDM2; inducing its degradation. Deubiquitinated by USP7; leading to stabilize it.

The protein localises to the cytoplasm. Its subcellular location is the nucleus. The protein resides in the nucleoplasm. It is found in the PML body. It localises to the nucleolus. The protein localises to the chromosome. Its subcellular location is the centromere. Its function is as follows. Transcription corepressor known to repress transcriptional potential of several sumoylated transcription factors. Down-regulates basal and activated transcription. Its transcription repressor activity is modulated by recruiting it to subnuclear compartments like the nucleolus or PML/POD/ND10 nuclear bodies through interactions with MCSR1 and PML, respectively. Seems to regulate transcription in PML/POD/ND10 nuclear bodies together with PML and may influence TNFRSF6-dependent apoptosis thereby. Inhibits transcriptional activation of PAX3 and ETS1 through direct protein-protein interactions. Modulates PAX5 activity; the function seems to involve CREBBP. Acts as an adapter protein in a MDM2-DAXX-USP7 complex by regulating the RING-finger E3 ligase MDM2 ubiquitination activity. Under non-stress condition, in association with the deubiquitinating USP7, prevents MDM2 self-ubiquitination and enhances the intrinsic E3 ligase activity of MDM2 towards TP53, thereby promoting TP53 ubiquitination and subsequent proteasomal degradation. Upon DNA damage, its association with MDM2 and USP7 is disrupted, resulting in increased MDM2 autoubiquitination and consequently, MDM2 degradation, which leads to TP53 stabilization. Acts as a histone chaperone that facilitates deposition of histone H3.3. Acts as a targeting component of the chromatin remodeling complex ATRX:DAXX which has ATP-dependent DNA translocase activity and catalyzes the replication-independent deposition of histone H3.3 in pericentric DNA repeats outside S-phase and telomeres, and the in vitro remodeling of H3.3-containing nucleosomes. Does not affect the ATPase activity of ATRX but alleviates its transcription repression activity. Upon neuronal activation associates with regulatory elements of selected immediate early genes where it promotes deposition of histone H3.3 which may be linked to transcriptional induction of these genes. Required for the recruitment of histone H3.3:H4 dimers to PML-nuclear bodies (PML-NBs); the process is independent of ATRX and facilitated by ASF1A; PML-NBs are suggested to function as regulatory sites for the incorporation of newly synthesized histone H3.3 into chromatin. Proposed to mediate activation of the JNK pathway and apoptosis via MAP3K5 in response to signaling from TNFRSF6 and TGFBR2. Interaction with HSPB1/HSP27 may prevent interaction with TNFRSF6 and MAP3K5 and block DAXX-mediated apoptosis. In contrast, in lymphoid cells JNC activation and TNFRSF6-mediated apoptosis may not involve DAXX. Plays a role as a positive regulator of the heat shock transcription factor HSF1 activity during the stress protein response. The chain is Death domain-associated protein 6 (DAXX) from Canis lupus familiaris (Dog).